We begin with the raw amino-acid sequence, 382 residues long: Ribosomal RNA large subunit methyltransferase G (382 aa).

The protein belongs to the methyltransferase superfamily. RlmG family.

Its subcellular location is the cytoplasm. It catalyses the reaction guanosine(1835) in 23S rRNA + S-adenosyl-L-methionine = N(2)-methylguanosine(1835) in 23S rRNA + S-adenosyl-L-homocysteine + H(+). Specifically methylates the guanine in position 1835 (m2G1835) of 23S rRNA. The sequence is that of Ribosomal RNA large subunit methyltransferase G from Aliivibrio fischeri (strain MJ11) (Vibrio fischeri).